We begin with the raw amino-acid sequence, 290 residues long: GTPase Era (290 aa).

In terms of domain architecture, Era-type G spans 2–168; the sequence is KVCIISILGR…IEILKEYAYN (167 aa). A G1 region spans residues 10 to 17; the sequence is GRPNVGKS. GTP is bound at residue 10-17; it reads GRPNVGKS. The segment at 36–40 is G2; it reads QTTRD. The interval 57 to 60 is G3; sequence DTPG. GTP-binding positions include 57–61 and 118–121; these read DTPGI and SKID. Positions 118-121 are G4; it reads SKID. Residues 147 to 149 are G5; it reads VSN. Positions 199–275 constitute a KH type-2 domain; that stretch reads LTDELPHSIA…TLNLKVKVSN (77 aa).

Belongs to the TRAFAC class TrmE-Era-EngA-EngB-Septin-like GTPase superfamily. Era GTPase family. In terms of assembly, monomer.

The protein localises to the cytoplasm. The protein resides in the cell membrane. Functionally, an essential GTPase that binds both GDP and GTP, with rapid nucleotide exchange. Plays a role in 16S rRNA processing and 30S ribosomal subunit biogenesis and possibly also in cell cycle regulation and energy metabolism. The polypeptide is GTPase Era (Mycoplasmopsis agalactiae (strain NCTC 10123 / CIP 59.7 / PG2) (Mycoplasma agalactiae)).